Consider the following 473-residue polypeptide: 3-isopropylmalate dehydratase large subunit (473 aa).

Residues C349, C409, and C412 each coordinate [4Fe-4S] cluster.

This sequence belongs to the aconitase/IPM isomerase family. LeuC type 1 subfamily. In terms of assembly, heterodimer of LeuC and LeuD. [4Fe-4S] cluster serves as cofactor.

It catalyses the reaction (2R,3S)-3-isopropylmalate = (2S)-2-isopropylmalate. Its pathway is amino-acid biosynthesis; L-leucine biosynthesis; L-leucine from 3-methyl-2-oxobutanoate: step 2/4. Catalyzes the isomerization between 2-isopropylmalate and 3-isopropylmalate, via the formation of 2-isopropylmaleate. This Gloeobacter violaceus (strain ATCC 29082 / PCC 7421) protein is 3-isopropylmalate dehydratase large subunit.